The sequence spans 696 residues: Elongation factor G 2 (696 aa).

Residues 5 to 281 (SKYRNIGIFA…AVVDYLPSPT (277 aa)) form the tr-type G domain. GTP-binding positions include 14–21 (AHVDAGKT), 78–82 (DTPGH), and 132–135 (NKLD).

This sequence belongs to the TRAFAC class translation factor GTPase superfamily. Classic translation factor GTPase family. EF-G/EF-2 subfamily.

Its subcellular location is the cytoplasm. Its function is as follows. Catalyzes the GTP-dependent ribosomal translocation step during translation elongation. During this step, the ribosome changes from the pre-translocational (PRE) to the post-translocational (POST) state as the newly formed A-site-bound peptidyl-tRNA and P-site-bound deacylated tRNA move to the P and E sites, respectively. Catalyzes the coordinated movement of the two tRNA molecules, the mRNA and conformational changes in the ribosome. The polypeptide is Elongation factor G 2 (Vibrio parahaemolyticus serotype O3:K6 (strain RIMD 2210633)).